The primary structure comprises 299 residues: tRNA pseudouridine synthase A (299 aa).

The active-site Nucleophile is Asp67. Tyr125 is a binding site for substrate.

Belongs to the tRNA pseudouridine synthase TruA family. As to quaternary structure, homodimer.

The catalysed reaction is uridine(38/39/40) in tRNA = pseudouridine(38/39/40) in tRNA. In terms of biological role, formation of pseudouridine at positions 38, 39 and 40 in the anticodon stem and loop of transfer RNAs. The protein is tRNA pseudouridine synthase A of Parasynechococcus marenigrum (strain WH8102).